The chain runs to 174 residues: DNA endonuclease I-HmuI (174 aa).

The polypeptide is DNA endonuclease I-HmuI (Bacillus subtilis (Bacteriophage SP01)).